Reading from the N-terminus, the 538-residue chain is Syncytin-1 (538 aa).

The N-terminal stretch at 1 to 20 is a signal peptide; sequence MALPYHIFLFTVLLPSFTLT. Residues 21 to 443 lie on the Extracellular side of the membrane; it reads APPPCRCMTS…NTGPWGLLSQ (423 aa). The N-linked (GlcNAc...) asparagine glycan is linked to N169. A CXXC motif is present at residues 186-189; that stretch reads CWIC. Disulfide bonds link C186–C189, C186–C405, and C397–C404. N-linked (GlcNAc...) asparagine glycosylation is found at N208, N214, N234, N242, and N281. The interval 320–340 is fusion peptide; sequence ILPFVIGAGVLGALGTGIGGI. Residues 380–396 are immunosuppression; the sequence is LQNRRALDLLTAERGGT. The short motif at 397–406 is the CX6CC element; it reads CLFLGEECCY. N409 is a glycosylation site (N-linked (GlcNAc...) asparagine). A helical membrane pass occupies residues 444–464; that stretch reads WMPWILPFLGPLAAIILLLLF. The interval 465–484 is essential for the fusiogenic function; the sequence is GPCIFNLLVNFVSSRIEAVK. Residues 465–538 lie on the Cytoplasmic side of the membrane; it reads GPCIFNLLVN…LLRPNSAGSS (74 aa). The disordered stretch occupies residues 496–538; sequence KIYRRPLDRPASPRSDVNDIKGTPPEEISAAQPLLRPNSAGSS.

Belongs to the gamma type-C retroviral envelope protein family. HERV class-I W env subfamily. In terms of assembly, the mature envelope protein (Env) consists of a trimer of SU-TM heterodimers attached probably by a labile interchain disulfide bond. Interacts with the C-type lectin CD209/DC-SIGN. Specific enzymatic cleavages in vivo yield mature proteins. Envelope glycoproteins are synthesized as an inactive precursor that is heavily N-glycosylated and processed likely by furin in the Golgi to yield the mature SU and TM proteins. The cleavage site between SU and TM requires the minimal sequence [KR]-X-[KR]-R. The intracytoplasmic tail cleavage by the viral protease that is required for the fusiogenic activity of some retroviruses envelope proteins seems to have been lost during evolution. In terms of processing, the CXXC motif is highly conserved across a broad range of retroviral envelope proteins. It is thought to participate in the formation of a labile disulfide bond possibly with the CX6CC motif present in the transmembrane protein. Isomerization of the intersubunit disulfide bond to an SU intrachain disulfide bond is thought to occur upon receptor recognition in order to allow membrane fusion. As to expression, expressed at higher level in placental syncytiotrophoblast. Expressed at intermediate level in testis. Seems also to be found at low level in adrenal tissue, bone marrow, breast, colon, kidney, ovary, prostate, skin, spleen, thymus, thyroid, brain and trachea. Both mRNA and protein levels are significantly increased in the brain of individuals with multiple sclerosis, particularly in astrocytes and microglia.

It localises to the cell membrane. The protein localises to the virion. In terms of biological role, this endogenous retroviral envelope protein has retained its original fusogenic properties and participates in trophoblast fusion and the formation of a syncytium during placenta morphogenesis. May induce fusion through binding of SLC1A4 and SLC1A5. Endogenous envelope proteins may have kept, lost or modified their original function during evolution. Retroviral envelope proteins mediate receptor recognition and membrane fusion during early infection. The surface protein (SU) mediates receptor recognition, while the transmembrane protein (TM) acts as a class I viral fusion protein. The protein may have at least 3 conformational states: pre-fusion native state, pre-hairpin intermediate state, and post-fusion hairpin state. During viral and target cell membrane fusion, the coiled coil regions (heptad repeats) assume a trimer-of-hairpins structure, positioning the fusion peptide in close proximity to the C-terminal region of the ectodomain. The formation of this structure appears to drive apposition and subsequent fusion of membranes. The polypeptide is Syncytin-1 (ERVW-1) (Homo sapiens (Human)).